The primary structure comprises 184 residues: C-phycoerythrin class 1 subunit beta (184 aa).

2 residues coordinate (2R,3E)-phycoerythrobilin: cysteine 50 and cysteine 61. Asparagine 72 is modified (N4-methylasparagine). Residues cysteine 82 and cysteine 165 each contribute to the (2R,3E)-phycoerythrobilin site.

The protein belongs to the phycobiliprotein family. In terms of assembly, heterodimer of an alpha and a beta chain. In terms of processing, contains three covalently linked phycoerythrobilin chromophores.

It localises to the cellular thylakoid membrane. In terms of biological role, light-harvesting photosynthetic bile pigment-protein from the phycobiliprotein complex. The protein is C-phycoerythrin class 1 subunit beta (cpeB) of Synechococcus sp. (strain WH8020).